The following is an 88-amino-acid chain: Putative membrane protein insertion efficiency factor (88 aa).

The tract at residues 66–88 (DFVPPKKEKNADSEHSCKAHHHH) is disordered. The segment covering 69-82 (PPKKEKNADSEHSC) has biased composition (basic and acidic residues).

This sequence belongs to the UPF0161 family.

The protein localises to the cell membrane. In terms of biological role, could be involved in insertion of integral membrane proteins into the membrane. This Listeria monocytogenes serotype 4b (strain CLIP80459) protein is Putative membrane protein insertion efficiency factor.